The primary structure comprises 5043 residues: Polyketide synthase PksJ (5043 aa).

Residues 141 to 481 form an adenylation 1 region; the sequence is AVITDRGMHQ…ELPEIETSYT (341 aa). The 78-residue stretch at 590-667 folds into the Carrier 1 domain; it reads RVREEIQKHL…RLASYLSEHE (78 aa). Ser627 is modified (O-(pantetheine 4'-phosphoryl)serine). A condensation region spans residues 690–989; sequence QATFQPLSEV…NMLPIRSELN (300 aa). An adenylation 2 region spans residues 1181–1578; it reads TYRELDEKST…EHPGILECVV (398 aa). A Carrier 2 domain is found at 1654–1729; the sequence is TSPKNIQDTV…NISQYITEQR (76 aa). Position 1689 is an O-(pantetheine 4'-phosphoryl)serine (Ser1689). One can recognise a Ketosynthase family 3 (KS3) 1 domain in the interval 1760-2186; that stretch reads DDSVAIIGIS…GTNTHAIFEQ (427 aa). Active-site for beta-ketoacyl synthase 1 activity residues include Cys1932, His2068, and His2108. The segment at 2374–2499 is N-terminal hotdog fold; sequence HPLLHQNTSD…GSAELASAAE (126 aa). A PKS/mFAS DH domain is found at 2374–2661; sequence HPLLHQNTSD…TRVLEGEVHT (288 aa). Residue His2403 is the Proton acceptor; for dehydratase activity of the active site. The tract at residues 2513–2661 is C-terminal hotdog fold; it reads GKGKMSPDQF…TRVLEGEVHT (149 aa). Asp2575 acts as the Proton donor; for dehydratase activity in catalysis. Carrier domains are found at residues 3114–3188 and 3212–3286; these read RKLE…VAAY and SSLE…TVEH. O-(pantetheine 4'-phosphoryl)serine occurs at positions 3148 and 3246. A disordered region spans residues 3291 to 3314; the sequence is VQEREKPEGQEELQTKSSEAPKIT. The Ketosynthase family 3 (KS3) 2 domain occupies 3339-3779; sequence FEPVAIVGIS…GVNAHIVIEE (441 aa). Active-site for beta-ketoacyl synthase 2 activity residues include Cys3511, His3646, and His3695. Residues 3839–3872 adopt a coiled-coil conformation; the sequence is REEMDERLACVAGTMQELEEKLQAFVDGKEETDE. A Carrier 5 domain is found at 4459–4536; it reads GLLSETQSWL…RFADWLIGSY (78 aa). Ser4496 is subject to O-(pantetheine 4'-phosphoryl)serine. Residues 4588 to 4992 form the Ketosynthase family 3 (KS3) 3 domain; the sequence is AEGIAVVGLS…GTNAHVIVEA (405 aa). The For beta-ketoacyl synthase 3 activity role is filled by Cys4743.

It belongs to the ATP-dependent AMP-binding enzyme family. Requires pantetheine 4'-phosphate as cofactor.

It is found in the cytoplasm. It participates in antibiotic biosynthesis; bacillaene biosynthesis. Involved in some intermediate steps for the synthesis of the antibiotic polyketide bacillaene which is involved in secondary metabolism. This Bacillus subtilis (strain 168) protein is Polyketide synthase PksJ (pksJ).